The sequence spans 369 residues: Phenylalanine--tRNA ligase alpha subunit (369 aa).

Residue E270 coordinates Mg(2+).

The protein belongs to the class-II aminoacyl-tRNA synthetase family. Phe-tRNA synthetase alpha subunit type 1 subfamily. As to quaternary structure, tetramer of two alpha and two beta subunits. Mg(2+) serves as cofactor.

It is found in the cytoplasm. The enzyme catalyses tRNA(Phe) + L-phenylalanine + ATP = L-phenylalanyl-tRNA(Phe) + AMP + diphosphate + H(+). This chain is Phenylalanine--tRNA ligase alpha subunit, found in Phenylobacterium zucineum (strain HLK1).